Reading from the N-terminus, the 121-residue chain is MARIAGINIPPHKHAEIGLTSIYGVGRTTAQKICEACGIAYNKKVKDLDDSDLEKIREEVGRLTIEGDLRREISINIKRLMDLGCYRGFRHRRGLPVRGQRTRTNSRTRKGPKKGAAALKK.

Positions 94-121 (GLPVRGQRTRTNSRTRKGPKKGAAALKK) are disordered.

This sequence belongs to the universal ribosomal protein uS13 family. As to quaternary structure, part of the 30S ribosomal subunit. Forms a loose heterodimer with protein S19. Forms two bridges to the 50S subunit in the 70S ribosome.

Located at the top of the head of the 30S subunit, it contacts several helices of the 16S rRNA. In the 70S ribosome it contacts the 23S rRNA (bridge B1a) and protein L5 of the 50S subunit (bridge B1b), connecting the 2 subunits; these bridges are implicated in subunit movement. Contacts the tRNAs in the A and P-sites. The protein is Small ribosomal subunit protein uS13 of Leptothrix cholodnii (strain ATCC 51168 / LMG 8142 / SP-6) (Leptothrix discophora (strain SP-6)).